Here is a 266-residue protein sequence, read N- to C-terminus: ES1 protein homolog, mitochondrial (266 aa).

A mitochondrion-targeting transit peptide spans 1–39 (MAAVRVLVSPRLASALLPLSGRHRTTSQRAAIHSSAPRP). An N6-acetyllysine mark is found at lysine 149, lysine 155, and lysine 162. Lysine 201 is subject to N6-acetyllysine; alternate. Lysine 201 bears the N6-succinyllysine; alternate mark. Lysine 217 is subject to N6-acetyllysine. 2 positions are modified to N6-acetyllysine; alternate: lysine 221 and lysine 231. N6-succinyllysine; alternate is present on residues lysine 221 and lysine 231.

Belongs to the ES1 family.

It is found in the mitochondrion. This Rattus norvegicus (Rat) protein is ES1 protein homolog, mitochondrial.